The following is a 264-amino-acid chain: Neurexophilin-2 (264 aa).

Residues 1–22 (MRLRPLPLVVVPGLLQLLFCDS) form the signal peptide. Positions 23–90 (KEVVHATEGL…WDWLANITEI (68 aa)) are II. N-linked (GlcNAc...) asparagine glycans are attached at residues Asn86, Asn139, Asn149, and Asn155. The III stretch occupies residues 91–169 (QEPLARTKRR…LVPPSKVVEF (79 aa)). An IV (linker domain) region spans residues 170 to 178 (EVSPQSTLE). Positions 179 to 264 (TKESKSFNCR…HSETPYLSSG (86 aa)) are v (Cys-rich).

It belongs to the neurexophilin family. In terms of processing, may be proteolytically processed at the boundary between the N-terminal non-conserved and the central conserved domain in neuron-like cells. As to expression, expressed in brain and kidney.

It localises to the secreted. In terms of biological role, may be signaling molecules that resemble neuropeptides and that act by binding to alpha-neurexins and possibly other receptors. The polypeptide is Neurexophilin-2 (NXPH2) (Homo sapiens (Human)).